A 567-amino-acid polypeptide reads, in one-letter code: D-lactate dehydrogenase [cytochrome], mitochondrial (567 aa).

Residues 1–56 constitute a mitochondrion transit peptide; sequence MAFASKFARSKTILSFLRPCRQLHSTPKSTGDVTVLSPVKGRRRLPTCWSSSLFPL. The FAD-binding PCMH-type domain occupies 142–319; the sequence is AVNIPDVVVF…TEITLRLQKI (178 aa).

It belongs to the FAD-binding oxidoreductase/transferase type 4 family. Homodimer. FAD serves as cofactor. In terms of tissue distribution, expressed in leaves, stems, flowers and roots.

Its subcellular location is the mitochondrion. It carries out the reaction (R)-lactate + 2 Fe(III)-[cytochrome c] = 2 Fe(II)-[cytochrome c] + pyruvate + 2 H(+). With respect to regulation, inhibited by cyanide ions. Functionally, catalyzes the stereospecific oxidation of D-lactate to pyruvate. Involved in the detoxification of methylglyoxal and D-lactate, but probably not involved in the metabolization of glycolate. This chain is D-lactate dehydrogenase [cytochrome], mitochondrial, found in Arabidopsis thaliana (Mouse-ear cress).